The chain runs to 464 residues: Fumarate hydratase class II (464 aa).

Substrate-binding positions include Ser-96 to Thr-98, His-127 to Asp-130, Ser-137 to Asn-139, and Thr-185. The active-site Proton donor/acceptor is the His-186. Residue Ser-316 is part of the active site. Substrate is bound by residues Ser-317 and Lys-322–Asn-324.

The protein belongs to the class-II fumarase/aspartase family. Fumarase subfamily. As to quaternary structure, homotetramer.

It is found in the cytoplasm. It carries out the reaction (S)-malate = fumarate + H2O. The protein operates within carbohydrate metabolism; tricarboxylic acid cycle; (S)-malate from fumarate: step 1/1. Functionally, involved in the TCA cycle. Catalyzes the stereospecific interconversion of fumarate to L-malate. The chain is Fumarate hydratase class II from Pseudomonas syringae pv. tomato (strain ATCC BAA-871 / DC3000).